The following is a 326-amino-acid chain: Probable fructokinase-4 (326 aa).

Belongs to the carbohydrate kinase PfkB family.

It catalyses the reaction D-fructose + ATP = D-fructose 6-phosphate + ADP + H(+). It functions in the pathway glycan biosynthesis; starch biosynthesis. In terms of biological role, may play an important role in maintaining the flux of carbon towards starch formation. The chain is Probable fructokinase-4 from Arabidopsis thaliana (Mouse-ear cress).